A 314-amino-acid polypeptide reads, in one-letter code: UDP-N-acetylenolpyruvoylglucosamine reductase (314 aa).

One can recognise an FAD-binding PCMH-type domain in the interval 25-191 (KIGGPADLFA…VRVGMELRWG (167 aa)). The active site involves Arg-170. Ser-220 acts as the Proton donor in catalysis. Residue Glu-291 is part of the active site.

The protein belongs to the MurB family. It depends on FAD as a cofactor.

It is found in the cytoplasm. The catalysed reaction is UDP-N-acetyl-alpha-D-muramate + NADP(+) = UDP-N-acetyl-3-O-(1-carboxyvinyl)-alpha-D-glucosamine + NADPH + H(+). It functions in the pathway cell wall biogenesis; peptidoglycan biosynthesis. In terms of biological role, cell wall formation. The polypeptide is UDP-N-acetylenolpyruvoylglucosamine reductase (Heliobacterium modesticaldum (strain ATCC 51547 / Ice1)).